A 138-amino-acid polypeptide reads, in one-letter code: Aspartate 1-decarboxylase (138 aa).

Serine 25 (schiff-base intermediate with substrate; via pyruvic acid) is an active-site residue. Residue serine 25 is modified to Pyruvic acid (Ser). Threonine 57 is a substrate binding site. The Proton donor role is filled by tyrosine 58. Residue 73–75 coordinates substrate; it reads GAA. The disordered stretch occupies residues 116–138; it reads ELGGDPAQVPDGSGLKNPRHPEA.

Belongs to the PanD family. As to quaternary structure, heterooctamer of four alpha and four beta subunits. Pyruvate serves as cofactor. Is synthesized initially as an inactive proenzyme, which is activated by self-cleavage at a specific serine bond to produce a beta-subunit with a hydroxyl group at its C-terminus and an alpha-subunit with a pyruvoyl group at its N-terminus.

The protein localises to the cytoplasm. It carries out the reaction L-aspartate + H(+) = beta-alanine + CO2. Its pathway is cofactor biosynthesis; (R)-pantothenate biosynthesis; beta-alanine from L-aspartate: step 1/1. In terms of biological role, catalyzes the pyruvoyl-dependent decarboxylation of aspartate to produce beta-alanine. This is Aspartate 1-decarboxylase from Corynebacterium jeikeium (strain K411).